A 108-amino-acid chain; its full sequence is UPF0060 membrane protein SA2130 (108 aa).

4 helical membrane-spanning segments follow: residues 5-25, 31-51, 60-80, and 86-106; these read IFIFILAGLCEIGGGYLIWLW, SSLVGLIGGAILMLYGVIATF, VYAAYGGVFIIMSLIFAMVVD, and KYDVIGAIICIVGVLVMLLPS.

It belongs to the UPF0060 family.

Its subcellular location is the cell membrane. This Staphylococcus aureus (strain N315) protein is UPF0060 membrane protein SA2130.